The following is a 407-amino-acid chain: D-galactonate dehydratase family member Pjdr2_1176 (407 aa).

D208 contributes to the Mg(2+) binding site. H210 contacts D-arabinonate. Mg(2+)-binding residues include E234 and E260. The D-arabinonate site is built by E260, R281, and E337.

Belongs to the mandelate racemase/muconate lactonizing enzyme family. GalD subfamily.

Its function is as follows. Has no detectable activity with D-mannonate and with a panel of 70 other acid sugars (in vitro), in spite of the conservation of the residues that are expected to be important for catalytic activity and cofactor binding. May have evolved a divergent function. The chain is D-galactonate dehydratase family member Pjdr2_1176 from Paenibacillus sp. (strain JDR-2).